The primary structure comprises 234 residues: Phosphoglycolate phosphatase (234 aa).

D8 (nucleophile) is an active-site residue. The Mg(2+) site is built by D8 and D10. Residue K157 participates in substrate binding. Mg(2+)-binding residues include D180 and D184.

Belongs to the archaeal SPP-like hydrolase family. Requires Mg(2+) as cofactor.

The enzyme catalyses 2-phosphoglycolate + H2O = glycolate + phosphate. Catalyzes the dephosphorylation of 2-phosphoglycolate. The polypeptide is Phosphoglycolate phosphatase (Methanoculleus marisnigri (strain ATCC 35101 / DSM 1498 / JR1)).